The chain runs to 364 residues: Anhydro-N-acetylmuramic acid kinase (364 aa).

ATP is bound at residue 11–18 (GSSLDGID).

It belongs to the anhydro-N-acetylmuramic acid kinase family.

It catalyses the reaction 1,6-anhydro-N-acetyl-beta-muramate + ATP + H2O = N-acetyl-D-muramate 6-phosphate + ADP + H(+). Its pathway is amino-sugar metabolism; 1,6-anhydro-N-acetylmuramate degradation. It participates in cell wall biogenesis; peptidoglycan recycling. Functionally, catalyzes the specific phosphorylation of 1,6-anhydro-N-acetylmuramic acid (anhMurNAc) with the simultaneous cleavage of the 1,6-anhydro ring, generating MurNAc-6-P. Is required for the utilization of anhMurNAc either imported from the medium or derived from its own cell wall murein, and thus plays a role in cell wall recycling. This Pseudomonas savastanoi pv. phaseolicola (strain 1448A / Race 6) (Pseudomonas syringae pv. phaseolicola (strain 1448A / Race 6)) protein is Anhydro-N-acetylmuramic acid kinase.